The chain runs to 176 residues: ATP synthase subunit b (176 aa).

Residues 18 to 38 (GVEWGTVIVTVITFAILLALL) form a helical membrane-spanning segment.

The protein belongs to the ATPase B chain family. As to quaternary structure, F-type ATPases have 2 components, F(1) - the catalytic core - and F(0) - the membrane proton channel. F(1) has five subunits: alpha(3), beta(3), gamma(1), delta(1), epsilon(1). F(0) has three main subunits: a(1), b(2) and c(10-14). The alpha and beta chains form an alternating ring which encloses part of the gamma chain. F(1) is attached to F(0) by a central stalk formed by the gamma and epsilon chains, while a peripheral stalk is formed by the delta and b chains.

It is found in the cell membrane. In terms of biological role, f(1)F(0) ATP synthase produces ATP from ADP in the presence of a proton or sodium gradient. F-type ATPases consist of two structural domains, F(1) containing the extramembraneous catalytic core and F(0) containing the membrane proton channel, linked together by a central stalk and a peripheral stalk. During catalysis, ATP synthesis in the catalytic domain of F(1) is coupled via a rotary mechanism of the central stalk subunits to proton translocation. Component of the F(0) channel, it forms part of the peripheral stalk, linking F(1) to F(0). The protein is ATP synthase subunit b of Staphylococcus haemolyticus (strain JCSC1435).